Consider the following 391-residue polypeptide: GDP-mannose transporter (391 aa).

The segment covering 1–11 has biased composition (basic and acidic residues); that stretch reads MDDKKNEDVEM. The interval 1 to 28 is disordered; it reads MDDKKNEDVEMRNFNGRSSPSQRDPFIS. Residues 1–44 lie on the Cytoplasmic side of the membrane; sequence MDDKKNEDVEMRNFNGRSSPSQRDPFISKPGAAKRGGSSFDLSN. The chain crosses the membrane as a helical span at residues 45 to 65; sequence VTNSPGISILAYCLASISMTV. Topologically, residues 66-75 are lumenal; sequence TNKYCVSGSN. A helical transmembrane segment spans residues 76–96; that stretch reads WNLNFFYLAIQSVVCIIAIII. Residues 97 to 115 are Cytoplasmic-facing; the sequence is CKQAGLITNLAPFDTKKAK. Residues 116 to 138 form a helical membrane-spanning segment; sequence TWFPISLLLVGMIYTSTKALQFL. At 139–141 the chain is on the lumenal side; it reads SVP. A helical membrane pass occupies residues 142-164; the sequence is VYTIFKNLTIIVIAYGEVLWFGG. Topologically, residues 165–170 are cytoplasmic; sequence SVTPSA. Residues 171 to 193 traverse the membrane as a helical segment; it reads LFSFGLMVLSSVVAAWADIQHAL. Residues 194-209 are Lumenal-facing; that stretch reads YGGGATQTKEAADALS. The chain crosses the membrane as a helical span at residues 210 to 230; it reads TLNAGYAWMGMNVFCTAAYVL. Residues 231–245 lie on the Cytoplasmic side of the membrane; that stretch reads SMRKVIKKMNFKDWD. The helical transmembrane segment at 246 to 266 threads the bilayer; it reads TMFYNNLLTIPVLFVCSFVFE. 2 N-linked (GlcNAc...) asparagine glycosylation sites follow: Asn-267 and Asn-272. Residues 267-284 are Lumenal-facing; that stretch reads NWSSENLTKNFPLETRNN. The chain crosses the membrane as a helical span at residues 285–305; the sequence is LILGMIYSGLATIFISYCSAW. At 306-313 the chain is on the cytoplasmic side; that stretch reads CIRVTSST. Residues 314 to 336 form a helical membrane-spanning segment; the sequence is TYSMVGALNKLPIAVSGLVFFAA. Residues 337–339 lie on the Lumenal side of the membrane; that stretch reads PVT. Residues 340–359 form a helical membrane-spanning segment; the sequence is FGSVSAIFIGFVSGIVYAWA. The Cytoplasmic segment spans residues 360–391; sequence KVRQNQSKGSVLPTTQPVMSASSQSNRDAAKA. The segment at 369–391 is disordered; sequence SVLPTTQPVMSASSQSNRDAAKA.

Belongs to the TPT transporter family. SLC35D subfamily. Homooligomer.

The protein localises to the golgi apparatus membrane. Its subcellular location is the cytoplasmic vesicle membrane. It localises to the endoplasmic reticulum membrane. Its function is as follows. Involved in the import of GDP-mannose from the cytoplasm into the Golgi lumen. This Sclerotinia sclerotiorum (strain ATCC 18683 / 1980 / Ss-1) (White mold) protein is GDP-mannose transporter (vrg4).